Here is a 361-residue protein sequence, read N- to C-terminus: N-methyltransferase benX (361 aa).

This sequence belongs to the methyltransferase superfamily.

The protein operates within secondary metabolite biosynthesis. Its function is as follows. N-methyltransferase; part of the gene cluster that mediates the biosynthesis of benzomalvin A and D. The pathway begins with the loading of amino acid precursors onto the A domains of the non ribosomal peptide synthetases benY and benZ. BenY and the A1 domain of benZ are loaded with anthranilate (Anth), while the A2 domain of benZ is loaded with phenylalanine (Phe). N-methylation of Phe by the methyltransferase benX may happen before loading of Phe onto benZ, after loading of Phe, or after dipeptide formation. Condensation of Anth with the secondary amine of NmPhe or Phe is catalyzed by the C1 domain of benZ, forming a dipeptide intermediate. This is followed by in trans condensation of the Anth-NmPhe dipeptide with Anth bound to the T domain of benY by the C2 domain of benZ to form the linear tripeptide Anth-NmPhe-Anth. Cyclization and release of the tripeptide is then catalyzed by the C-terminal C domain of benY and the resulting 11-member macrocyclic intermediate is expected to spontaneously collapse to form the benzodiazepine core. Benzomalvin A is in conformational equilibrium with its atropisomer, benzomalvin D. This Aspergillus terreus protein is N-methyltransferase benX.